Consider the following 308-residue polypeptide: Glutaminase (308 aa).

Residues serine 66, asparagine 117, glutamate 161, asparagine 168, tyrosine 192, tyrosine 244, and valine 262 each contribute to the substrate site.

It belongs to the glutaminase family. Homotetramer.

The catalysed reaction is L-glutamine + H2O = L-glutamate + NH4(+). This Yersinia pestis bv. Antiqua (strain Nepal516) protein is Glutaminase.